We begin with the raw amino-acid sequence, 420 residues long: 2',3'-cyclic-nucleotide 3'-phosphodiesterase (420 aa).

Ser9 carries the post-translational modification Phosphoserine. Tyr110 is modified (phosphotyrosine). Residues Ser169, Ser227, and Ser239 each carry the phosphoserine modification. His250 functions as the Proton acceptor in the catalytic mechanism. Thr252 serves as a coordination point for substrate. Residue His329 is the Proton donor of the active site. Substrate is bound at residue Thr331. Ser358 is modified (phosphoserine). At Cys417 the chain carries Cysteine methyl ester. Cys417 carries S-farnesyl cysteine lipidation. Positions Thr418–Ile420 are cleaved as a propeptide — removed in mature form.

This sequence belongs to the 2H phosphoesterase superfamily. CNPase family. In terms of assembly, exists as monomers and homodimers.

Its subcellular location is the membrane. The protein resides in the melanosome. It carries out the reaction a nucleoside 2',3'-cyclic phosphate + H2O = a nucleoside 2'-phosphate + H(+). Catalyzes the formation of 2'-nucleotide products from 2',3'-cyclic substrates. May participate in RNA metabolism in the myelinating cell, CNP is the third most abundant protein in central nervous system myelin. This is 2',3'-cyclic-nucleotide 3'-phosphodiesterase from Mus musculus (Mouse).